The sequence spans 609 residues: Isocitrate dehydrogenase kinase/phosphatase (609 aa).

Residues 325 to 331 (APGIKGM) and lysine 346 contribute to the ATP site. The active site involves aspartate 381.

It belongs to the AceK family.

Its subcellular location is the cytoplasm. The enzyme catalyses L-seryl-[isocitrate dehydrogenase] + ATP = O-phospho-L-seryl-[isocitrate dehydrogenase] + ADP + H(+). Bifunctional enzyme which can phosphorylate or dephosphorylate isocitrate dehydrogenase (IDH) on a specific serine residue. This is a regulatory mechanism which enables bacteria to bypass the Krebs cycle via the glyoxylate shunt in response to the source of carbon. When bacteria are grown on glucose, IDH is fully active and unphosphorylated, but when grown on acetate or ethanol, the activity of IDH declines drastically concomitant with its phosphorylation. The chain is Isocitrate dehydrogenase kinase/phosphatase from Acidovorax sp. (strain JS42).